Consider the following 396-residue polypeptide: Elongation factor Tu (396 aa).

The tr-type G domain occupies 10 to 206; the sequence is KPHVNVGTIG…ALDSYIPTPE (197 aa). Positions 19–26 are G1; it reads GHVDHGKT. 19–26 serves as a coordination point for GTP; sequence GHVDHGKT. Mg(2+) is bound at residue Thr-26. Residues 60-64 form a G2 region; sequence GITIN. Positions 81–84 are G3; it reads DCPG. GTP is bound by residues 81–85 and 136–139; these read DCPGH and NKCD. The G4 stretch occupies residues 136 to 139; sequence NKCD. The tract at residues 174-176 is G5; that stretch reads SAK.

This sequence belongs to the TRAFAC class translation factor GTPase superfamily. Classic translation factor GTPase family. EF-Tu/EF-1A subfamily. As to quaternary structure, monomer.

Its subcellular location is the cytoplasm. It carries out the reaction GTP + H2O = GDP + phosphate + H(+). GTP hydrolase that promotes the GTP-dependent binding of aminoacyl-tRNA to the A-site of ribosomes during protein biosynthesis. In Ralstonia nicotianae (strain ATCC BAA-1114 / GMI1000) (Ralstonia solanacearum), this protein is Elongation factor Tu.